The chain runs to 107 residues: Ferredoxin (107 aa).

A propeptide spanning residues 1–8 (MVSGVSRN) is cleaved from the precursor. Residues C45, C51, and C54 each coordinate [2Fe-2S] cluster.

The cofactor is [2Fe-2S] cluster.

Its subcellular location is the hydrogenosome. Functionally, ferredoxins are iron-sulfur proteins that transfer electrons in a wide variety of metabolic reactions. This chain is Ferredoxin, found in Psalteriomonas lanterna (Amoeboflagellate).